Reading from the N-terminus, the 105-residue chain is Large ribosomal subunit protein uL24 (105 aa).

Belongs to the universal ribosomal protein uL24 family. Part of the 50S ribosomal subunit.

In terms of biological role, one of two assembly initiator proteins, it binds directly to the 5'-end of the 23S rRNA, where it nucleates assembly of the 50S subunit. Its function is as follows. One of the proteins that surrounds the polypeptide exit tunnel on the outside of the subunit. In Marinomonas sp. (strain MWYL1), this protein is Large ribosomal subunit protein uL24.